The chain runs to 548 residues: Chaperonin GroEL (548 aa).

ATP is bound by residues 30–33 (TLGP), lysine 51, 87–91 (DGTTT), glycine 415, 479–481 (NAA), and aspartate 495.

It belongs to the chaperonin (HSP60) family. As to quaternary structure, forms a cylinder of 14 subunits composed of two heptameric rings stacked back-to-back. Interacts with the co-chaperonin GroES.

It localises to the cytoplasm. It carries out the reaction ATP + H2O + a folded polypeptide = ADP + phosphate + an unfolded polypeptide.. In terms of biological role, together with its co-chaperonin GroES, plays an essential role in assisting protein folding. The GroEL-GroES system forms a nano-cage that allows encapsulation of the non-native substrate proteins and provides a physical environment optimized to promote and accelerate protein folding. In Klebsiella pneumoniae subsp. pneumoniae (strain ATCC 700721 / MGH 78578), this protein is Chaperonin GroEL.